A 192-amino-acid chain; its full sequence is Peptidyl-tRNA hydrolase (192 aa).

Tyr14 provides a ligand contact to tRNA. His19 acts as the Proton acceptor in catalysis. Residues Tyr66 and Asn68 each coordinate tRNA.

Belongs to the PTH family. As to quaternary structure, monomer.

It is found in the cytoplasm. The enzyme catalyses an N-acyl-L-alpha-aminoacyl-tRNA + H2O = an N-acyl-L-amino acid + a tRNA + H(+). Hydrolyzes ribosome-free peptidyl-tRNAs (with 1 or more amino acids incorporated), which drop off the ribosome during protein synthesis, or as a result of ribosome stalling. In terms of biological role, catalyzes the release of premature peptidyl moieties from peptidyl-tRNA molecules trapped in stalled 50S ribosomal subunits, and thus maintains levels of free tRNAs and 50S ribosomes. This Coprothermobacter proteolyticus (strain ATCC 35245 / DSM 5265 / OCM 4 / BT) protein is Peptidyl-tRNA hydrolase.